A 44-amino-acid chain; its full sequence is Phosphatase RapA inhibitor (44 aa).

Residues 1–39 (MKSKWMSGLLLVAVGFSFTQVMVHAGETANTEGKTFHIA) constitute a propeptide that is removed on maturation.

The protein belongs to the Phr family. Interacts with RapA and inhibits its interaction with Spo0F. Secreted with a propeptide domain, which is cleaved in the cell wall by the secreted serine proteases subtilisin and Vpr to produce a mature signaling peptide. Contains a predicted signal peptide cleavage site in the N-terminal region, however the propeptide is probably subject to only one processing event, at the N-terminal end of the mature peptide.

The protein resides in the secreted. The protein localises to the cytoplasm. Its activity is regulated as follows. Inhibition of RapA requires a free carboxylate group at the C-terminal end of the PhrA pentapeptide. A free C-terminal carboxylic acid PhrA pentapeptide inhibits RapA phosphatase activity at a 1:1 ratio and is approximately 200 fold more active than a C-terminal amide peptide. Functionally, signaling molecule involved in the regulation of sporulation. Secreted during production, but the mature peptide acts intracellularly, indicating that it needs to be imported into the cell to function. Inhibitor of the RapA phosphatase activity. Does not act on RapB. In Bacillus subtilis (strain 168), this protein is Phosphatase RapA inhibitor.